Reading from the N-terminus, the 322-residue chain is Phosphatidylserine decarboxylase proenzyme (322 aa).

Catalysis depends on charge relay system; for autoendoproteolytic cleavage activity residues Asp-90, His-147, and Ser-254. The active-site Schiff-base intermediate with substrate; via pyruvic acid; for decarboxylase activity is the Ser-254. Ser-254 is subject to Pyruvic acid (Ser); by autocatalysis. Residues 293–322 (PDAEPAPLPAEEIEAEHDASPLIDDKKDQV) form a disordered region. The segment covering 308 to 322 (EHDASPLIDDKKDQV) has biased composition (basic and acidic residues).

It belongs to the phosphatidylserine decarboxylase family. PSD-B subfamily. Prokaryotic type I sub-subfamily. In terms of assembly, heterodimer of a large membrane-associated beta subunit and a small pyruvoyl-containing alpha subunit. Pyruvate is required as a cofactor. Is synthesized initially as an inactive proenzyme. Formation of the active enzyme involves a self-maturation process in which the active site pyruvoyl group is generated from an internal serine residue via an autocatalytic post-translational modification. Two non-identical subunits are generated from the proenzyme in this reaction, and the pyruvate is formed at the N-terminus of the alpha chain, which is derived from the carboxyl end of the proenzyme. The autoendoproteolytic cleavage occurs by a canonical serine protease mechanism, in which the side chain hydroxyl group of the serine supplies its oxygen atom to form the C-terminus of the beta chain, while the remainder of the serine residue undergoes an oxidative deamination to produce ammonia and the pyruvoyl prosthetic group on the alpha chain. During this reaction, the Ser that is part of the protease active site of the proenzyme becomes the pyruvoyl prosthetic group, which constitutes an essential element of the active site of the mature decarboxylase.

The protein localises to the cell membrane. It carries out the reaction a 1,2-diacyl-sn-glycero-3-phospho-L-serine + H(+) = a 1,2-diacyl-sn-glycero-3-phosphoethanolamine + CO2. The protein operates within phospholipid metabolism; phosphatidylethanolamine biosynthesis; phosphatidylethanolamine from CDP-diacylglycerol: step 2/2. Its function is as follows. Catalyzes the formation of phosphatidylethanolamine (PtdEtn) from phosphatidylserine (PtdSer). The sequence is that of Phosphatidylserine decarboxylase proenzyme from Escherichia coli O127:H6 (strain E2348/69 / EPEC).